We begin with the raw amino-acid sequence, 61 residues long: Small ribosomal subunit protein uS14 (61 aa).

Residues C24, C27, C40, and C43 each contribute to the Zn(2+) site.

It belongs to the universal ribosomal protein uS14 family. Zinc-binding uS14 subfamily. As to quaternary structure, part of the 30S ribosomal subunit. Contacts proteins S3 and S10. Zn(2+) serves as cofactor.

In terms of biological role, binds 16S rRNA, required for the assembly of 30S particles and may also be responsible for determining the conformation of the 16S rRNA at the A site. This chain is Small ribosomal subunit protein uS14, found in Clostridium novyi (strain NT).